Here is a 266-residue protein sequence, read N- to C-terminus: GATA-type zinc finger protein 1 (266 aa).

Disordered stretches follow at residues 1–31, 106–129, and 171–191; these read MEAA…KSRP, TQCP…PRKQ, and CSQK…SSEA. Residues 106 to 121 show a composition bias toward polar residues; it reads TQCPNLEISSATSPAS. The segment at 197-221 adopts a GATA-type zinc-finger fold; sequence CASCRTQRTPLWRDAEDGTPLCNAC.

Specifically expressed in adult testis and ovary. Expressed at high levels in the somatic cells of the developing gonads, including Leydig cells in the testes and granulosa cells in the ovaries.

The protein resides in the nucleus. Functionally, transcriptional regulator that plays a key role in germ cell development. Determines the oogenic fate by activating key genes for the oogenic program and meiotic prophase entry. Acts downstream of bone morphogenetic protein (BMP) by regulating expression of genes required for the oogenic programs, which are repressed by Polycomb activities in sexually uncommitted germ cells. Regulates expression of STRA8, a central downstream effector for the meiotic program. Acts independently of retinoic acid (RA). In males, not required for germ-cell sex determination, but required to allow the spermatogonia to efficiently accomplish the meiotic prophase. This chain is GATA-type zinc finger protein 1, found in Mus musculus (Mouse).